Here is an 89-residue protein sequence, read N- to C-terminus: Small ribosomal subunit protein bS20 (89 aa).

The span at 1 to 12 (MANIKSAKKRVK) shows a compositional bias: basic residues. Positions 1–20 (MANIKSAKKRVKQTVVRNER) are disordered.

The protein belongs to the bacterial ribosomal protein bS20 family.

Binds directly to 16S ribosomal RNA. This chain is Small ribosomal subunit protein bS20, found in Xylella fastidiosa (strain 9a5c).